Consider the following 328-residue polypeptide: Interleukin-12 subunit beta (328 aa).

A signal peptide spans 1–22; that stretch reads MCHQQLVISWFSLVFLASPLMA. Residues 29–106 form the Ig-like C2-type domain; the sequence is DVYVVELDWY…LSHSLLLLHK (78 aa). Cysteine 50 and cysteine 90 are oxidised to a cystine. 4 N-linked (GlcNAc...) asparagine glycosylation sites follow: asparagine 125, asparagine 135, asparagine 222, and asparagine 303. One can recognise a Fibronectin type-III domain in the interval 237 to 328; sequence PPKNLQLKPL…WSEWASVPCS (92 aa).

It belongs to the IL-12B family. Heterodimer with IL12A; disulfide-linked. The heterodimer is known as interleukin IL-12. Heterodimer with IL23A; disulfide-linked. The heterodimer is known as interleukin IL-23. Also secreted as a monomer. Interacts with NBR1; this interaction promotes IL-12 secretion.

Its subcellular location is the secreted. Functionally, cytokine that can act as a growth factor for activated T and NK cells, enhance the lytic activity of NK/lymphokine-activated killer cells, and stimulate the production of IFN-gamma by resting PBMC. Associates with IL23A to form the IL-23 interleukin, a heterodimeric cytokine which functions in innate and adaptive immunity. IL-23 may constitute with IL-17 an acute response to infection in peripheral tissues. IL-23 binds to a heterodimeric receptor complex composed of IL12RB1 and IL23R, activates the Jak-Stat signaling cascade, stimulates memory rather than naive T-cells and promotes production of pro-inflammatory cytokines. IL-23 induces autoimmune inflammation and thus may be responsible for autoimmune inflammatory diseases and may be important for tumorigenesis. This is Interleukin-12 subunit beta (IL12B) from Papio anubis (Olive baboon).